The chain runs to 167 residues: Xanthine-guanine phosphoribosyltransferase (167 aa).

5-phospho-alpha-D-ribose 1-diphosphate-binding positions include 47-48, Gln79, and 102-110; these read RG and DDLVDSGKT. Gln79 is a GMP binding site. Residue Asp103 coordinates Mg(2+). Asp106 and Ile149 together coordinate guanine. Positions 106 and 149 each coordinate xanthine. GMP is bound by residues 106-110 and 148-149; these read DSGKT and WI.

The protein belongs to the purine/pyrimidine phosphoribosyltransferase family. XGPT subfamily. Homotetramer. It depends on Mg(2+) as a cofactor.

The protein resides in the cell inner membrane. It catalyses the reaction GMP + diphosphate = guanine + 5-phospho-alpha-D-ribose 1-diphosphate. The catalysed reaction is XMP + diphosphate = xanthine + 5-phospho-alpha-D-ribose 1-diphosphate. The enzyme catalyses IMP + diphosphate = hypoxanthine + 5-phospho-alpha-D-ribose 1-diphosphate. Its pathway is purine metabolism; GMP biosynthesis via salvage pathway; GMP from guanine: step 1/1. It participates in purine metabolism; XMP biosynthesis via salvage pathway; XMP from xanthine: step 1/1. In terms of biological role, purine salvage pathway enzyme that catalyzes the transfer of the ribosyl-5-phosphate group from 5-phospho-alpha-D-ribose 1-diphosphate (PRPP) to the N9 position of the 6-oxopurines guanine and xanthine to form the corresponding ribonucleotides GMP (guanosine 5'-monophosphate) and XMP (xanthosine 5'-monophosphate), with the release of PPi. To a lesser extent, also acts on hypoxanthine. This chain is Xanthine-guanine phosphoribosyltransferase, found in Cereibacter sphaeroides (strain ATCC 17029 / ATH 2.4.9) (Rhodobacter sphaeroides).